The primary structure comprises 349 residues: Phospho-N-acetylmuramoyl-pentapeptide-transferase (349 aa).

10 helical membrane passes run 13–33, 69–89, 91–111, 129–149, 165–185, 197–217, 228–248, 252–272, 278–298, and 327–347; these read LFFSLALTGMTTLVLTVSLGV, GGGVLLFISLIASLLVWLPWG, FSTWFFIILLTCYAGLGWYDD, FMVQIAIAAFTLIALPYIYGS, LSLPFWLGKVFCLGLALVAII, LDGLAAGTMSFAALGFIFVAL, VAYVLAALVGACIGFLWYNGF, LFMGDTGSLLLGGLLGSCAVM, ILVVIGGVFVAEAGSVILQVL, and IVMRFWIFSFVCAGLGIAAVL.

It belongs to the glycosyltransferase 4 family. MraY subfamily. The cofactor is Mg(2+).

Its subcellular location is the cell inner membrane. The catalysed reaction is UDP-N-acetyl-alpha-D-muramoyl-L-alanyl-gamma-D-glutamyl-meso-2,6-diaminopimeloyl-D-alanyl-D-alanine + di-trans,octa-cis-undecaprenyl phosphate = di-trans,octa-cis-undecaprenyl diphospho-N-acetyl-alpha-D-muramoyl-L-alanyl-D-glutamyl-meso-2,6-diaminopimeloyl-D-alanyl-D-alanine + UMP. It participates in cell wall biogenesis; peptidoglycan biosynthesis. Catalyzes the initial step of the lipid cycle reactions in the biosynthesis of the cell wall peptidoglycan: transfers peptidoglycan precursor phospho-MurNAc-pentapeptide from UDP-MurNAc-pentapeptide onto the lipid carrier undecaprenyl phosphate, yielding undecaprenyl-pyrophosphoryl-MurNAc-pentapeptide, known as lipid I. This chain is Phospho-N-acetylmuramoyl-pentapeptide-transferase, found in Chlamydia pneumoniae (Chlamydophila pneumoniae).